Reading from the N-terminus, the 915-residue chain is Coiled-coil domain-containing protein 57 (915 aa).

The tract at residues 1-502 (MLPLGSEPAL…MHGLPRPGAQ (502 aa)) is centrosomal targeting domain. 4 coiled-coil regions span residues 92-173 (VSEL…QRQE), 214-422 (LEAL…LERD), 456-483 (KSQVAAKLQETEQALQEQEVVLKAVTLE), and 521-548 (IQRLREQNTSLRNAIAQMRKEMEALSHQ). Disordered regions lie at residues 555–574 (TAAESTDANQPDPEAGGDAA), 606–653 (PLKM…QAGP), and 724–915 (QHGG…NIMD). Residues 606 to 915 (PLKMSSPHAE…PKIRNYNIMD (310 aa)) form a microtubule binding domain region. A compositionally biased stretch (polar residues) spans 613 to 627 (HAESQPSVRTSTETT). Low complexity predominate over residues 628–652 (GGSAQAGQAGGSVQAGQAGGSVQAG). The span at 745-758 (GREDAKSAEDEAPS) shows a compositional bias: basic and acidic residues. 3 stretches are compositionally biased toward polar residues: residues 781 to 794 (PKTQHSIHTVTCKS), 819 to 830 (SHSSSSFASGTL), and 841 to 852 (SSPSGVTSQGDS). The span at 879-891 (KTAAQAKAKTTGA) shows a compositional bias: low complexity.

As to quaternary structure, interacts with CEP63; the interaction is required for their location to proximal end of centrioles. Interacts with microtubules.

The protein localises to the cytoplasm. The protein resides in the cytoskeleton. It is found in the microtubule organizing center. It localises to the centrosome. Its subcellular location is the centriolar satellite. The protein localises to the centriole. The protein resides in the spindle. Pleiotropic regulator of centriole duplication, mitosis, and ciliogenesis. Critical interface between centrosome and microtubule-mediated cellular processes. Centriole duplication protein required for recruitment of CEP63, CEP152, and PLK4 to the centrosome. Independent of its centrosomal targeting, localizes to and interacts with microtubules and regulates microtubule nucleation, stability, and mitotic progression. This Homo sapiens (Human) protein is Coiled-coil domain-containing protein 57.